We begin with the raw amino-acid sequence, 550 residues long: Chaperonin GroEL (550 aa).

Residues 30 to 33 (TLGP), K51, 87 to 91 (DGTTT), G416, 480 to 482 (NVA), and D496 each bind ATP. The segment at 525 to 550 (LPKKDDEGGGGDMGGMGGMGGMGGMM) is disordered. Residues 534 to 550 (GGDMGGMGGMGGMGGMM) are compositionally biased toward gly residues.

It belongs to the chaperonin (HSP60) family. In terms of assembly, forms a cylinder of 14 subunits composed of two heptameric rings stacked back-to-back. Interacts with the co-chaperonin GroES.

It is found in the cytoplasm. The enzyme catalyses ATP + H2O + a folded polypeptide = ADP + phosphate + an unfolded polypeptide.. In terms of biological role, together with its co-chaperonin GroES, plays an essential role in assisting protein folding. The GroEL-GroES system forms a nano-cage that allows encapsulation of the non-native substrate proteins and provides a physical environment optimized to promote and accelerate protein folding. In Halorhodospira halophila (strain DSM 244 / SL1) (Ectothiorhodospira halophila (strain DSM 244 / SL1)), this protein is Chaperonin GroEL.